A 968-amino-acid chain; its full sequence is RNA polymerase-associated protein RapA (968 aa).

The Helicase ATP-binding domain maps to 164 to 334; that stretch reads DVGRRHAPRV…FARLRLLDPN (171 aa). 177 to 184 contacts ATP; sequence DEVGLGKT. Residues 280-283 carry the DEAH box motif; that stretch reads DEAH. A Helicase C-terminal domain is found at 490-685; the sequence is RVEWLMGYLT…ALKAQLEQGR (196 aa).

It belongs to the SNF2/RAD54 helicase family. RapA subfamily. Interacts with the RNAP. Has a higher affinity for the core RNAP than for the holoenzyme. Its ATPase activity is stimulated by binding to RNAP.

Transcription regulator that activates transcription by stimulating RNA polymerase (RNAP) recycling in case of stress conditions such as supercoiled DNA or high salt concentrations. Probably acts by releasing the RNAP, when it is trapped or immobilized on tightly supercoiled DNA. Does not activate transcription on linear DNA. Probably not involved in DNA repair. The chain is RNA polymerase-associated protein RapA from Salmonella typhi.